A 486-amino-acid polypeptide reads, in one-letter code: Phosphomethylpyrimidine synthase (486 aa).

Residues Asn80, Met109, Tyr139, His175, Ser195 to Gly197, Asp236 to Arg239, and Glu275 each bind substrate. Zn(2+) is bound at residue His279. Tyr329 provides a ligand contact to substrate. Residue His370 coordinates Zn(2+). The [4Fe-4S] cluster site is built by Cys450, Cys453, and Cys458.

Belongs to the ThiC family. [4Fe-4S] cluster is required as a cofactor.

The catalysed reaction is 5-amino-1-(5-phospho-beta-D-ribosyl)imidazole + S-adenosyl-L-methionine = 4-amino-2-methyl-5-(phosphooxymethyl)pyrimidine + CO + 5'-deoxyadenosine + formate + L-methionine + 3 H(+). It participates in cofactor biosynthesis; thiamine diphosphate biosynthesis. Catalyzes the synthesis of the hydroxymethylpyrimidine phosphate (HMP-P) moiety of thiamine from aminoimidazole ribotide (AIR) in a radical S-adenosyl-L-methionine (SAM)-dependent reaction. This chain is Phosphomethylpyrimidine synthase, found in Trichodesmium erythraeum (strain IMS101).